Consider the following 551-residue polypeptide: Cleavage and polyadenylation specificity factor subunit 6 (551 aa).

In terms of domain architecture, RRM spans 81-161; it reads IALYIGNLTW…QNPVVTPCNK (81 aa). Residue threonine 157 is modified to Phosphothreonine. Positions 169–180 are enriched in polar residues; it reads MQSRKTTQSGQM. Disordered stretches follow at residues 169 to 410 and 477 to 551; these read MQSR…TPLS and LHGI…YRHR. 3 stretches are compositionally biased toward pro residues: residues 237 to 265, 285 to 366, and 377 to 388; these read TRPPLGPPGPPGPPGPPPPGQVLPPPLAG, GQPP…PPPA, and GPPPTDPYGRPP. Composition is skewed to basic and acidic residues over residues 389 to 404 and 489 to 503; these read PYDRGDYGPPGREMDA and SRRERSRERDHSRSR. Serine 494, serine 500, serine 511, serine 513, and serine 525 each carry phosphoserine. The span at 504-514 shows a compositional bias: basic residues; that stretch reads EKSRRHKSRSR. The span at 515–551 shows a compositional bias: basic and acidic residues; sequence DRHDDYYRERSRERERHRDRDRDRDRERDREREYRHR.

Belongs to the RRM CPSF6/7 family. As to quaternary structure, component of the cleavage factor Im (CFIm) complex.

It is found in the nucleus. The protein resides in the nucleoplasm. Its subcellular location is the nucleus speckle. It localises to the cytoplasm. Its function is as follows. Component of the cleavage factor Im (CFIm) complex that functions as an activator of the pre-mRNA 3'-end cleavage and polyadenylation processing required for the maturation of pre-mRNA into functional mRNAs. CFIm contributes to the recruitment of multiprotein complexes on specific sequences on the pre-mRNA 3'-end, so called cleavage and polyadenylation signals (pA signals). Most pre-mRNAs contain multiple pA signals, resulting in alternative cleavage and polyadenylation (APA) producing mRNAs with variable 3'-end formation. The CFIm complex acts as a key regulator of cleavage and polyadenylation site choice during APA through its binding to 5'-UGUA-3' elements localized in the 3'-untranslated region (UTR) for a huge number of pre-mRNAs. Plays a role in mRNA export. This chain is Cleavage and polyadenylation specificity factor subunit 6, found in Gallus gallus (Chicken).